A 243-amino-acid polypeptide reads, in one-letter code: Leucyl/phenylalanyl-tRNA--protein transferase (243 aa).

Belongs to the L/F-transferase family.

It localises to the cytoplasm. It carries out the reaction N-terminal L-lysyl-[protein] + L-leucyl-tRNA(Leu) = N-terminal L-leucyl-L-lysyl-[protein] + tRNA(Leu) + H(+). It catalyses the reaction N-terminal L-arginyl-[protein] + L-leucyl-tRNA(Leu) = N-terminal L-leucyl-L-arginyl-[protein] + tRNA(Leu) + H(+). The enzyme catalyses L-phenylalanyl-tRNA(Phe) + an N-terminal L-alpha-aminoacyl-[protein] = an N-terminal L-phenylalanyl-L-alpha-aminoacyl-[protein] + tRNA(Phe). Its function is as follows. Functions in the N-end rule pathway of protein degradation where it conjugates Leu, Phe and, less efficiently, Met from aminoacyl-tRNAs to the N-termini of proteins containing an N-terminal arginine or lysine. This Xylella fastidiosa (strain 9a5c) protein is Leucyl/phenylalanyl-tRNA--protein transferase.